The sequence spans 122 residues: Large ribosomal subunit protein uL14c (122 aa).

Belongs to the universal ribosomal protein uL14 family. Part of the 50S ribosomal subunit.

Its subcellular location is the plastid. It is found in the chloroplast. Binds to 23S rRNA. The polypeptide is Large ribosomal subunit protein uL14c (Staurastrum punctulatum (Green alga)).